The sequence spans 523 residues: Asc-type amino acid transporter 1 (523 aa).

The segment at 1-28 (MAGHTQQPSGRGNPRPAPSPSPVPGTVP) is disordered. Over residues 15–25 (RPAPSPSPVPG) the composition is skewed to pro residues. 9 helical membrane passes run 40-60 (IGLL…GIFI), 72-92 (VGLA…GSLC), 113-133 (IFGG…MYPT), 268-288 (AIFI…IAYF), 310-330 (LLGY…FGGI), 362-382 (CTPI…MLVG), 388-408 (INYV…GLLL), 424-444 (LLIP…SFIS), and 448-468 (VCGV…LGVF). The interval 499–523 (APEEEENGPCPPSLLPATDKPSKPQ) is disordered.

It belongs to the amino acid-polyamine-organocation (APC) superfamily. In terms of assembly, disulfide-linked heterodimer with the amino acid transport protein SLC3A2/4F2hc. Expressed in brain, heart, kidney, liver, lung, pancreas, placenta, and skeletal muscle.

The protein resides in the cell membrane. The catalysed reaction is L-alanine(in) + glycine(out) = L-alanine(out) + glycine(in). It catalyses the reaction L-serine(out) + L-alanine(in) = L-serine(in) + L-alanine(out). It carries out the reaction L-threonine(out) + L-alanine(in) = L-threonine(in) + L-alanine(out). The enzyme catalyses L-cysteine(out) + L-alanine(in) = L-cysteine(in) + L-alanine(out). The catalysed reaction is 2-aminoisobutanoate(out) + L-alanine(in) = 2-aminoisobutanoate(in) + L-alanine(out). It catalyses the reaction D-serine(out) + L-alanine(in) = D-serine(in) + L-alanine(out). It carries out the reaction D-alanine(out) + L-alanine(in) = D-alanine(in) + L-alanine(out). The enzyme catalyses L-valine(out) + L-alanine(in) = L-valine(in) + L-alanine(out). The catalysed reaction is L-methionine(out) + L-alanine(in) = L-methionine(in) + L-alanine(out). It catalyses the reaction beta-alanine(out) + L-alanine(in) = beta-alanine(in) + L-alanine(out). It carries out the reaction D-cysteine(out) + L-alanine(in) = D-cysteine(in) + L-alanine(out). The enzyme catalyses D-threonine(out) + L-alanine(in) = D-threonine(in) + L-alanine(out). The catalysed reaction is D-isoleucine(out) + D-serine(in) = D-isoleucine(in) + D-serine(out). It catalyses the reaction D-serine(in) = D-serine(out). In terms of biological role, associates with SLC3A2/4F2hc to form a functional heterodimeric complex that translocates small neutral L- and D-amino acids across the plasma membrane. Preferentially mediates exchange transport, but can also operate via facilitated diffusion. Acts as a major transporter for glycine, L- and D-serine in the central nervous system. At the spinal cord and brainstem regulates glycine metabolism and glycinergic inhibitory neurotransmission by providing for glycine de novo synthesis from L-serine and glycine recycling from astrocytes to glycinergic motor neurons. At Schaffer collateral-CA1 synapses mediates D-serine and glycine release that modulates post-synaptic activation of NMDA receptors and excitatory glutamatergic transmission. May regulate D-serine release from mesenchymal progenitors located in developing subcutaneous adipose tissue, favoring white adipocyte over thermogenic beige adipocyte lineage commitment. This chain is Asc-type amino acid transporter 1 (SLC7A10), found in Homo sapiens (Human).